Reading from the N-terminus, the 303-residue chain is RELT-like protein 2 (303 aa).

Residues 15-35 (LYMLFLLVLVFFLMGLVGFMI) form a helical membrane-spanning segment. 2 disordered regions span residues 46 to 67 (CRTS…DDDM) and 111 to 303 (SSLQ…AGGV). S52 is modified (phosphoserine). 2 stretches are compositionally biased toward basic and acidic residues: residues 148 to 158 (RSKEGKSRPRP) and 172 to 188 (THIE…DGSP). Gly residues predominate over residues 194–212 (GSGGGQDPGGGQGPGGGQP).

This sequence belongs to the RELT family. Interacts with RELT, RELL1, OXSR1, PLSCR1 and TRAF2.

It localises to the cell membrane. Its function is as follows. Induces activation of MAPK14/p38 cascade, when overexpressed. Induces apoptosis, when overexpressed. This Bos taurus (Bovine) protein is RELT-like protein 2 (RELL2).